A 1090-amino-acid polypeptide reads, in one-letter code: Solute carrier family 38 member 10 (1090 aa).

Transmembrane regions (helical) follow at residues 9–31 (WGLI…PFCF), 36–58 (IVLG…MFLV), 84–104 (LVET…YVVI), 123–143 (TVRV…LSLQ), 153–173 (FSAM…LSSL), 229–249 (IFAS…FFGY), 272–292 (MIRV…ILPC), 323–343 (VLTL…PNVE), 345–365 (ILGF…PALI), and 378–398 (VVLW…LSVT). Serine 441 carries the post-translational modification Phosphoserine. 6 stretches are compositionally biased toward basic and acidic residues: residues 441-454 (SQEK…KEVL), 493-508 (EAHR…KVVV), 517-528 (PEEKKPPPRLPD), 544-560 (ESEK…EGKR), 587-596 (PRKEDSRPGN), and 607-623 (DSVE…REPA). Disordered stretches follow at residues 441 to 675 (SQEK…AGSK), 729 to 831 (EIRQ…IDLR), and 857 to 1037 (KAAP…ELAP). Phosphoserine occurs at positions 608 and 636. Basic and acidic residues-rich tracts occupy residues 654-665 (EAAEQREKKEAE), 729-744 (EIRQ…KPKP), and 758-767 (GQEEEAEHAG). At threonine 769 the chain carries Phosphothreonine. Serine 887 is modified (phosphoserine). Residues 923–936 (RQSGPTKAPVQTQA) are compositionally biased toward polar residues. Composition is skewed to basic and acidic residues over residues 954 to 973 (PEVR…EQHK), 1004 to 1013 (ENAKPNRDLK), and 1026 to 1037 (DLASHPEQELAP).

The protein belongs to the amino acid/polyamine transporter 2 family. In terms of tissue distribution, expressed in neurons, astrocytes and epithelial cells scattered throughout the central nervous system structures including striatum, ependyma, cerebral cortex, hippocampus, hypothalamus, thalamus, pons, and cerebellum (at protein level). Highly expressed in paraventricular hypothalamic nucleus, suprachiasmatic nucleus, anterior hypothalamic area central part, in lateral ventricule and in dorsal 3rd ventricule (at protein level). Expressed in choroid plexus epithelial cells (at protein level).

It is found in the membrane. The catalysed reaction is L-glutamate(out) = L-glutamate(in). It catalyses the reaction L-glutamine(out) = L-glutamine(in). It carries out the reaction L-alanine(in) = L-alanine(out). The enzyme catalyses L-serine(in) = L-serine(out). The catalysed reaction is L-leucine(in) = L-leucine(out). Functionally, facilitates bidirectional transport of amino acids. May act as a glutamate sensor that regulates glutamate-glutamine cycle and mTOR signaling in the brain. The transport mechanism remains to be elucidated. This is Solute carrier family 38 member 10 from Mus musculus (Mouse).